A 423-amino-acid polypeptide reads, in one-letter code: Methanol:N,N-dimethyl-4-nitrosoaniline oxidoreductase (423 aa).

It belongs to the iron-containing alcohol dehydrogenase family. In terms of assembly, homodecamer. It depends on Mg(2+) as a cofactor. The cofactor is Zn(2+). Requires NADPH as cofactor.

It catalyses the reaction methanol + A = formaldehyde + AH2. Its function is as follows. Catalyzes the oxidation of methanol to yield formaldehyde. While the in vivo electron acceptor is not known, N,N-dimethyl-4-nitrosoaniline (NDMA) can serve this function in vitro and is reduced to 4-(hydroxylamino)-N,N-dimethylaniline. It is also able to use ethanol and formaldehyde with an activity comparable to methanol, and has a weak activity with methylamine as substrate. The sequence is that of Methanol:N,N-dimethyl-4-nitrosoaniline oxidoreductase from Mycobacterium sp. (strain DSM 3803 / JC1).